Here is a 448-residue protein sequence, read N- to C-terminus: Maintenance of mitochondrial morphology protein 1 (448 aa).

Residues 1 to 74 are Lumenal-facing; it reads MTESVIYSGT…LNHTWSFTQG (74 aa). A helical transmembrane segment spans residues 75–95; that stretch reads LVVGQLSVIVVVAIFIKFFVF. Residues 96-448 are Cytoplasmic-facing; sequence ADSSATTTTT…IVDKTEEASI (353 aa). 2 disordered regions span residues 119–144 and 303–357; these read RNKN…LNSP and LQNV…SQED. Residues 127 to 140 are compositionally biased toward basic and acidic residues; that stretch reads SNEDKDPNNNKEDD. In terms of domain architecture, SMP-LTD spans 164-419; that stretch reads SPESLDWFNV…EPRFQVVKVP (256 aa). The segment covering 313-332 has biased composition (low complexity); the sequence is PSNEPNSQNQTQQPTPVNNS. The segment covering 345–356 has biased composition (basic and acidic residues); that stretch reads ETKHSKAKRSQE.

This sequence belongs to the MMM1 family. As to quaternary structure, homodimer. Component of the ER-mitochondria encounter structure (ERMES) or MDM complex, composed of MMM1, MDM10, MDM12 and MDM34. An MMM1 homodimer associates with one molecule of MDM12 on each side in a pairwise head-to-tail manner, and the SMP-LTD domains of MMM1 and MDM12 generate a continuous hydrophobic tunnel for phospholipid trafficking.

The protein localises to the endoplasmic reticulum membrane. Functionally, component of the ERMES/MDM complex, which serves as a molecular tether to connect the endoplasmic reticulum (ER) and mitochondria. Components of this complex are involved in the control of mitochondrial shape and protein biogenesis, and function in nonvesicular lipid trafficking between the ER and mitochondria. The MDM12-MMM1 subcomplex functions in the major beta-barrel assembly pathway that is responsible for biogenesis of all outer membrane beta-barrel proteins, and acts in a late step after the SAM complex. The MDM10-MDM12-MMM1 subcomplex further acts in the TOM40-specific pathway after the action of the MDM12-MMM1 complex. Essential for establishing and maintaining the structure of mitochondria and maintenance of mtDNA nucleoids. The sequence is that of Maintenance of mitochondrial morphology protein 1 from Debaryomyces hansenii (strain ATCC 36239 / CBS 767 / BCRC 21394 / JCM 1990 / NBRC 0083 / IGC 2968) (Yeast).